Reading from the N-terminus, the 218-residue chain is Probable cutinase 3 (218 aa).

Positions 1–17 are cleaved as a signal peptide; the sequence is MSLRSVLVAALAALAVA. 2 disulfide bridges follow: Cys41–Cys120 and Cys67–Cys81. The Nucleophile role is filled by Ser131. Cys182 and Cys189 are joined by a disulfide. Asp186 is a catalytic residue. His199 functions as the Proton donor/acceptor in the catalytic mechanism.

This sequence belongs to the cutinase family.

The protein resides in the secreted. It catalyses the reaction cutin + H2O = cutin monomers.. Its function is as follows. Catalyzes the hydrolysis of complex carboxylic polyesters found in the cell wall of plants. Degrades cutin, a macromolecule that forms the structure of the plant cuticle. This chain is Probable cutinase 3, found in Aspergillus terreus (strain NIH 2624 / FGSC A1156).